A 505-amino-acid polypeptide reads, in one-letter code: L-arabinose isomerase (505 aa).

4 residues coordinate Mn(2+): Glu308, Glu335, His352, and His453.

The protein belongs to the arabinose isomerase family. Mn(2+) serves as cofactor.

The catalysed reaction is beta-L-arabinopyranose = L-ribulose. The protein operates within carbohydrate degradation; L-arabinose degradation via L-ribulose; D-xylulose 5-phosphate from L-arabinose (bacterial route): step 1/3. Catalyzes the conversion of L-arabinose to L-ribulose. In Bifidobacterium animalis subsp. lactis (strain AD011), this protein is L-arabinose isomerase.